The chain runs to 582 residues: ATP-dependent lipid A-core flippase (582 aa).

The next 5 helical transmembrane spans lie at 16–36 (LWPM…ALIL), 63–83 (ILVW…VSGF), 153–173 (IIGL…ILVV), 253–273 (PLIQ…ASFP), and 275–295 (VMET…IALM). Residues 28 to 310 (IVAAIALILN…LTNVNAQFQR (283 aa)) enclose the ABC transmembrane type-1 domain. An ABC transporter domain is found at 342 to 578 (IAFDHVTFSY…QGVYAQLHQL (237 aa)). 376–383 (GRSGSGKS) is a binding site for ATP.

It belongs to the ABC transporter superfamily. Lipid exporter (TC 3.A.1.106) family. In terms of assembly, homodimer.

The protein resides in the cell inner membrane. The catalysed reaction is ATP + H2O + lipid A-core oligosaccharideSide 1 = ADP + phosphate + lipid A-core oligosaccharideSide 2.. In terms of biological role, involved in lipopolysaccharide (LPS) biosynthesis. Translocates lipid A-core from the inner to the outer leaflet of the inner membrane. Transmembrane domains (TMD) form a pore in the inner membrane and the ATP-binding domain (NBD) is responsible for energy generation. In Sodalis glossinidius (strain morsitans), this protein is ATP-dependent lipid A-core flippase.